Reading from the N-terminus, the 375-residue chain is Hydrogenase-1 small chain (375 aa).

The tat-type signal signal peptide spans 1-47 (MNTNNEETFYQAMRRKGVSRRSFLKYCSLAATSLGLGAAMTPRIAWA). [4Fe-4S] cluster is bound by residues cysteine 64, cysteine 67, cysteine 162, cysteine 196, histidine 234, cysteine 237, cysteine 262, and cysteine 268. Residues cysteine 277, cysteine 296, and cysteine 299 each coordinate [3Fe-4S] cluster. A disordered region spans residues 353–375 (HNRHKQQLADAGQQSPDNEDKQA).

Belongs to the [NiFe]/[NiFeSe] hydrogenase small subunit family. Heterodimer of a large and a small subunit. The cofactor is [4Fe-4S] cluster. It depends on [3Fe-4S] cluster as a cofactor. In terms of processing, predicted to be exported by the Tat system. The position of the signal peptide cleavage has not been experimentally proven.

It is found in the cell membrane. The enzyme catalyses H2 + A = AH2. The polypeptide is Hydrogenase-1 small chain (hyaA) (Citrobacter freundii).